The chain runs to 81 residues: Protein Vpu (81 aa).

The Extracellular segment spans residues 1–7 (MSNLLAI). A helical membrane pass occupies residues 8–28 (GIAALIVALIITIVVWTIAYI). The Cytoplasmic portion of the chain corresponds to 29–81 (EYKKLVRQRKINRLYKRISERAEDSGNESEGDAEELAALGEVGPFIPGDINNL). Residues Ser-53 and Ser-57 each carry the phosphoserine; by host CK2 modification.

It belongs to the HIV-1 VPU protein family. As to quaternary structure, homopentamer. Interacts with host CD4 and BRTC; these interactions induce proteasomal degradation of CD4. Interacts with host BST2; this interaction leads to the degradation of host BST2. Interacts with host FBXW11. Interacts with host AP1M1; this interaction plays a role in the mistrafficking and subsequent degradation of host BST2. Interacts with host RANBP2; this interaction allows Vpu to down-regulate host BLM sumoylation. In terms of processing, phosphorylated by host CK2. This phosphorylation is necessary for interaction with human BTRC and degradation of CD4.

It is found in the host membrane. Ion channel activity is inhibited by hexamethylene amiloride in vitro. In terms of biological role, enhances virion budding by targeting host CD4 and Tetherin/BST2 to proteasome degradation. Degradation of CD4 prevents any unwanted premature interactions between viral Env and its host receptor CD4 in the endoplasmic reticulum. Degradation of antiretroviral protein Tetherin/BST2 is important for virion budding, as BST2 tethers new viral particles to the host cell membrane. Mechanistically, Vpu bridges either CD4 or BST2 to BTRC, a substrate recognition subunit of the Skp1/Cullin/F-box protein E3 ubiquitin ligase, induces their ubiquitination and subsequent proteasomal degradation. The alteration of the E3 ligase specificity by Vpu seems to promote the degradation of host IKBKB, leading to NF-kappa-B down-regulation and subsequent apoptosis. Acts as a viroporin that forms an oligomeric ion channel in membranes. Modulates the host DNA repair mechanisms to promote degradation of nuclear viral cDNA in cells that are already productively infected in order to suppress immune sensing and proviral hyper-integration (superinfection). Manipulates PML-NBs and modulates SUMOylation of host BLM protein thereby enhancing its DNA-end processing activity toward viral unintegrated linear DNA. Also inhibits RAD52-mediated homologous repair of viral cDNA, preventing the generation of dead-end circular forms of single copies of the long terminal repeat and permitting sustained nucleolytic attack. This Homo sapiens (Human) protein is Protein Vpu.